The primary structure comprises 38 residues: MTQPNPNKQSVELNRTSLFWGLLLIFVLAVLFSSYFFN.

Residues 17–37 (SLFWGLLLIFVLAVLFSSYFF) form a helical membrane-spanning segment.

Belongs to the PsbL family. PSII is composed of 1 copy each of membrane proteins PsbA, PsbB, PsbC, PsbD, PsbE, PsbF, PsbH, PsbI, PsbJ, PsbK, PsbL, PsbM, PsbT, PsbX, PsbY, PsbZ, Psb30/Ycf12, at least 3 peripheral proteins of the oxygen-evolving complex and a large number of cofactors. It forms dimeric complexes.

It localises to the plastid. Its subcellular location is the chloroplast thylakoid membrane. Functionally, one of the components of the core complex of photosystem II (PSII). PSII is a light-driven water:plastoquinone oxidoreductase that uses light energy to abstract electrons from H(2)O, generating O(2) and a proton gradient subsequently used for ATP formation. It consists of a core antenna complex that captures photons, and an electron transfer chain that converts photonic excitation into a charge separation. This subunit is found at the monomer-monomer interface and is required for correct PSII assembly and/or dimerization. The protein is Photosystem II reaction center protein L of Zygnema circumcarinatum (Green alga).